The chain runs to 628 residues: DEAD-box ATP-dependent RNA helicase 9 (628 aa).

Positions 98-126 (LEVAKLGISPKIVSQLASRGITKLFPIQR) match the Q motif motif. Positions 129–302 (LEPAMQGKDM…QKYLKNPVTI (174 aa)) constitute a Helicase ATP-binding domain. An ATP-binding site is contributed by 142–149 (AKTGTGKT). The DEAD box motif lies at 250 to 253 (DEAD). One can recognise a Helicase C-terminal domain in the interval 331 to 478 (VLGELIKEHA…KINVEGSDLM (148 aa)). Disordered regions lie at residues 496–548 (GSYG…SGFG) and 571–628 (SGFG…FGSS). Over residues 500–509 (RRGSFGSSSS) the composition is skewed to low complexity. Over residues 510–548 (RGGGFGDSGFGRSGGGFGRSGGGGFGRSSGGGFGDSGFG) the composition is skewed to gly residues.

The protein belongs to the DEAD box helicase family. DDX21/DDX50 subfamily.

It catalyses the reaction ATP + H2O = ADP + phosphate + H(+). In Oryza sativa subsp. japonica (Rice), this protein is DEAD-box ATP-dependent RNA helicase 9.